The sequence spans 626 residues: Putative ankyrin repeat protein L768 (626 aa).

ANK repeat units follow at residues 217 to 246, 333 to 362, 421 to 451, 515 to 545, and 547 to 571; these read NLYD…EYDF, DLDM…NINK, TAEN…TEHI, SNLK…NQDY, and QWAL…NVNP.

The sequence is that of Putative ankyrin repeat protein L768 from Acanthamoeba polyphaga mimivirus (APMV).